Here is a 346-residue protein sequence, read N- to C-terminus: Probable choline kinase 3 (346 aa).

ATP contacts are provided by R71, Q207, and D224.

This sequence belongs to the choline/ethanolamine kinase family.

It carries out the reaction choline + ATP = phosphocholine + ADP + H(+). It functions in the pathway phospholipid metabolism; phosphatidylcholine biosynthesis; phosphocholine from choline: step 1/1. Its function is as follows. Involved in phospholipid biosynthesis. Catalyzes the first step in phosphatidylcholine biosynthesis. The sequence is that of Probable choline kinase 3 from Arabidopsis thaliana (Mouse-ear cress).